We begin with the raw amino-acid sequence, 156 residues long: U4/U6.U5 small nuclear ribonucleoprotein 27 kDa protein (156 aa).

The segment at 1 to 98 (MGRSRSRSPE…IAAEDLEGKT (98 aa)) is disordered. Over residues 13–59 (RERRRSRSASRERERRRRERSRSRERRRSRSRSPHRRRSRSPRRHRS) the composition is skewed to basic residues. Over residues 66–98 (RLKDRRDDDKKDSKESKGAKERQIAAEDLEGKT) the composition is skewed to basic and acidic residues.

The protein belongs to the SNUT3 family. As to quaternary structure, part of a tri-snRNP complex.

Its subcellular location is the nucleus. In terms of biological role, may play a role in mRNA splicing. The sequence is that of U4/U6.U5 small nuclear ribonucleoprotein 27 kDa protein (snrnp27) from Xenopus tropicalis (Western clawed frog).